Consider the following 362-residue polypeptide: Peptide chain release factor 1 (362 aa).

Residue Gln240 is modified to N5-methylglutamine.

It belongs to the prokaryotic/mitochondrial release factor family. Post-translationally, methylated by PrmC. Methylation increases the termination efficiency of RF1.

It is found in the cytoplasm. In terms of biological role, peptide chain release factor 1 directs the termination of translation in response to the peptide chain termination codons UAG and UAA. This chain is Peptide chain release factor 1, found in Bifidobacterium longum (strain DJO10A).